The chain runs to 379 residues: Pectin lyase A (379 aa).

An N-terminal signal peptide occupies residues 1–20 (MKYSTIFSAAAAVFAGSAAA). Disulfide bonds link Cys83–Cys102 and Cys92–Cys226. A glycan (O-linked (Man) threonine) is linked at Thr88. Asn129 carries N-linked (GlcNAc...) asparagine glycosylation. The active site involves Arg256. Cys322 and Cys330 are joined by a disulfide. The O-linked (Man) serine; in strain 4M-147 glycan is linked to Ser368.

Belongs to the polysaccharide lyase 1 family. N-glycosylated at Asn-129 and O-glycosylated at Thr-88 when expressed in Aspergillus nidulans. The protein from strain 4M-147 is O-glycosylated at Thr-88 and Ser-368. PubMed:9195887 modeled GalNAc at the O-glycosylation site, a glycosylation not observed in fungi. The O-linked saccharide is probably mannose.

Its subcellular location is the secreted. It carries out the reaction Eliminative cleavage of (1-&gt;4)-alpha-D-galacturonan methyl ester to give oligosaccharides with 4-deoxy-6-O-methyl-alpha-D-galact-4-enuronosyl groups at their non-reducing ends.. Its function is as follows. Pectinolytic enzymes consist of four classes of enzymes: pectin lyase, polygalacturonase, pectin methylesterase and rhamnogalacturonase. Among pectinolytic enzymes, pectin lyase is the most important in depolymerization of pectin, since it cleaves internal glycosidic bonds of highly methylated pectins. The protein is Pectin lyase A (pelA) of Aspergillus niger.